Reading from the N-terminus, the 269-residue chain is Tryptophan synthase alpha chain (269 aa).

Catalysis depends on proton acceptor residues Glu49 and Asp60.

It belongs to the TrpA family. Tetramer of two alpha and two beta chains.

It carries out the reaction (1S,2R)-1-C-(indol-3-yl)glycerol 3-phosphate + L-serine = D-glyceraldehyde 3-phosphate + L-tryptophan + H2O. Its pathway is amino-acid biosynthesis; L-tryptophan biosynthesis; L-tryptophan from chorismate: step 5/5. The alpha subunit is responsible for the aldol cleavage of indoleglycerol phosphate to indole and glyceraldehyde 3-phosphate. The protein is Tryptophan synthase alpha chain of Pseudomonas fluorescens (strain SBW25).